A 712-amino-acid polypeptide reads, in one-letter code: UvrABC system protein B (712 aa).

The Helicase ATP-binding domain occupies 35–421 (RRVQAGEKDV…SDGAVEQIIR (387 aa)). 48–55 (GATGTGKS) is an ATP binding site. The Beta-hairpin motif lies at 101 to 124 (YYDYYQPEAYVPQSDTYIEKDSSI). A Helicase C-terminal domain is found at 438-604 (QIDDLVHEIR…PLRKKINDIV (167 aa)). Positions 625 to 655 (TKEGKGAKAPVPALGGQKTGGAKAARGRAKE) are disordered. The 36-residue stretch at 667–702 (AEQIEDLTTRMRAAAADLQFEIAARLRDEVSEMKKE) folds into the UVR domain.

This sequence belongs to the UvrB family. Forms a heterotetramer with UvrA during the search for lesions. Interacts with UvrC in an incision complex.

The protein resides in the cytoplasm. Functionally, the UvrABC repair system catalyzes the recognition and processing of DNA lesions. A damage recognition complex composed of 2 UvrA and 2 UvrB subunits scans DNA for abnormalities. Upon binding of the UvrA(2)B(2) complex to a putative damaged site, the DNA wraps around one UvrB monomer. DNA wrap is dependent on ATP binding by UvrB and probably causes local melting of the DNA helix, facilitating insertion of UvrB beta-hairpin between the DNA strands. Then UvrB probes one DNA strand for the presence of a lesion. If a lesion is found the UvrA subunits dissociate and the UvrB-DNA preincision complex is formed. This complex is subsequently bound by UvrC and the second UvrB is released. If no lesion is found, the DNA wraps around the other UvrB subunit that will check the other stand for damage. This Streptomyces coelicolor (strain ATCC BAA-471 / A3(2) / M145) protein is UvrABC system protein B.